The following is a 400-amino-acid chain: NADPH dehydrogenase 1 (400 aa).

Residues Thr-38 and Gln-115 each contribute to the FMN site. Positions 192 and 195 each coordinate substrate. Residue Tyr-197 is the Proton donor of the active site. 2 residues coordinate FMN: Arg-244 and Arg-349. Tyr-376 provides a ligand contact to substrate.

Homodimer or heterodimer. Requires FMN as cofactor.

The catalysed reaction is A + NADPH + H(+) = AH2 + NADP(+). Its function is as follows. Flavin-dependent enoate reductase that catalyzes the chemo- and stereoslective hydrogenation of electron-poor alkenes. The enzyme is reduced by NADPH, and oxygen, quinones, and alpha,beta-unsaturated aldehydes and ketones can act as electron acceptors to complete catalytic turnover. The physiological oxidant remains elusive. The protein is NADPH dehydrogenase 1 of Saccharomyces pastorianus (Lager yeast).